Here is a 179-residue protein sequence, read N- to C-terminus: Large ribosomal subunit protein uL5c (179 aa).

It belongs to the universal ribosomal protein uL5 family. As to quaternary structure, part of the 50S ribosomal subunit; contacts the 5S rRNA.

It is found in the plastid. Functionally, binds 5S rRNA, forms part of the central protuberance of the 50S subunit. In Euglena longa (Euglenophycean alga), this protein is Large ribosomal subunit protein uL5c (rpl5).